Here is a 28-residue protein sequence, read N- to C-terminus: Cyclotide vodo I2 (28 aa).

Cystine bridges form between Cys4-Cys18, Cys8-Cys20, and Cys13-Cys25.

Post-translationally, this is a cyclic peptide. Contains 3 disulfide bonds.

Probably participates in a plant defense mechanism. The protein is Cyclotide vodo I2 of Viola odorata (Sweet violet).